The following is a 315-amino-acid chain: Protein rlx (315 aa).

Residues Thr263–Arg315 form a disordered region.

Its function is as follows. This protein is probably required for relaxation complex formation and plasmid mobilization by conjugative plasmids. The sequence is that of Protein rlx (rlx) from Staphylococcus aureus.